Here is a 442-residue protein sequence, read N- to C-terminus: tRNA-2-methylthio-N(6)-dimethylallyladenosine synthase (442 aa).

The MTTase N-terminal domain occupies 3 to 120; that stretch reads KKLYIETHGC…LPEMIDAARV (118 aa). [4Fe-4S] cluster is bound by residues Cys-12, Cys-49, Cys-83, Cys-157, Cys-161, and Cys-164. The 233-residue stretch at 143–375 folds into the Radical SAM core domain; that stretch reads RVDGPSAYVS…QHRLNQQGFE (233 aa). Positions 378–442 constitute a TRAM domain; sequence RQMVGSIQRI…PHSLRGSLLQ (65 aa).

The protein belongs to the methylthiotransferase family. MiaB subfamily. In terms of assembly, monomer. The cofactor is [4Fe-4S] cluster.

The protein resides in the cytoplasm. The enzyme catalyses N(6)-dimethylallyladenosine(37) in tRNA + (sulfur carrier)-SH + AH2 + 2 S-adenosyl-L-methionine = 2-methylsulfanyl-N(6)-dimethylallyladenosine(37) in tRNA + (sulfur carrier)-H + 5'-deoxyadenosine + L-methionine + A + S-adenosyl-L-homocysteine + 2 H(+). Catalyzes the methylthiolation of N6-(dimethylallyl)adenosine (i(6)A), leading to the formation of 2-methylthio-N6-(dimethylallyl)adenosine (ms(2)i(6)A) at position 37 in tRNAs that read codons beginning with uridine. The chain is tRNA-2-methylthio-N(6)-dimethylallyladenosine synthase from Pseudomonas syringae pv. syringae (strain B728a).